The primary structure comprises 432 residues: Glutamate-1-semialdehyde 2,1-aminomutase (432 aa).

At Lys-270 the chain carries N6-(pyridoxal phosphate)lysine.

The protein belongs to the class-III pyridoxal-phosphate-dependent aminotransferase family. HemL subfamily. As to quaternary structure, homodimer. Pyridoxal 5'-phosphate serves as cofactor.

The protein localises to the cytoplasm. It carries out the reaction (S)-4-amino-5-oxopentanoate = 5-aminolevulinate. It participates in porphyrin-containing compound metabolism; protoporphyrin-IX biosynthesis; 5-aminolevulinate from L-glutamyl-tRNA(Glu): step 2/2. The protein is Glutamate-1-semialdehyde 2,1-aminomutase of Acinetobacter baumannii (strain ATCC 17978 / DSM 105126 / CIP 53.77 / LMG 1025 / NCDC KC755 / 5377).